The sequence spans 162 residues: Dihydrofolate reductase (162 aa).

In terms of domain architecture, DHFR spans Lys3–Arg161. Ile7–Ala9 contributes to the substrate binding site. NADP(+) contacts are provided by residues Ala8–Ala9 and Ile16–Ala21. A substrate-binding site is contributed by Asp29. Gly45–Thr48 contributes to the NADP(+) binding site. Substrate is bound at residue Arg60. Residues Ile65–Gln68 and Met98–Ile103 each bind NADP(+). Residue Thr117 participates in substrate binding.

This sequence belongs to the dihydrofolate reductase family.

It carries out the reaction (6S)-5,6,7,8-tetrahydrofolate + NADP(+) = 7,8-dihydrofolate + NADPH + H(+). Its pathway is cofactor biosynthesis; tetrahydrofolate biosynthesis; 5,6,7,8-tetrahydrofolate from 7,8-dihydrofolate: step 1/1. Key enzyme in folate metabolism. Catalyzes an essential reaction for de novo glycine and purine synthesis, and for DNA precursor synthesis. This is Dihydrofolate reductase (folA) from Neisseria meningitidis serogroup B (strain ATCC BAA-335 / MC58).